A 350-amino-acid chain; its full sequence is Protein O-mannose kinase (350 aa).

An N-acetylmethionine modification is found at Met-1. Over 1–20 (MEKQPQNKRRGLAPREVPPA) the chain is Cytoplasmic. A helical; Signal-anchor for type II membrane protein membrane pass occupies residues 21–43 (VGLLLIMALMNTLLYLCLDHFFI). The Lumenal segment spans residues 44–350 (APRQSIVDPR…AVMSQAREML (307 aa)). Residues 81–350 (VRQLKRVGEG…AVMSQAREML (270 aa)) enclose the Protein kinase domain. N-linked (GlcNAc...) asparagine glycosylation is found at Asn-165, Asn-220, and Asn-235.

The protein belongs to the protein kinase superfamily. Ser/Thr protein kinase family. STKL subfamily.

The protein localises to the endoplasmic reticulum membrane. It catalyses the reaction 3-O-[beta-D-GalNAc-(1-&gt;3)-beta-D-GlcNAc-(1-&gt;4)-alpha-D-Man]-L-Thr-[protein] + ATP = 3-O-[beta-D-GalNAc-(1-&gt;3)-beta-D-GlcNAc-(1-&gt;4)-(O-6-P-alpha-D-Man)]-Thr-[protein] + ADP + H(+). Its function is as follows. Protein O-mannose kinase that specifically mediates phosphorylation at the 6-position of an O-mannose of the trisaccharide (N-acetylgalactosamine (GalNAc)-beta-1,3-N-acetylglucosamine (GlcNAc)-beta-1,4-mannose) to generate phosphorylated O-mannosyl trisaccharide (N-acetylgalactosamine-beta-1,3-N-acetylglucosamine-beta-1,4-(phosphate-6-)mannose). Phosphorylated O-mannosyl trisaccharide is a carbohydrate structure present in alpha-dystroglycan (DAG1), which is required for binding laminin G-like domain-containing extracellular proteins with high affinity. Only shows kinase activity when the GalNAc-beta-3-GlcNAc-beta-terminus is linked to the 4-position of O-mannose, suggesting that this disaccharide serves as the substrate recognition motif. This chain is Protein O-mannose kinase (POMK), found in Macaca fascicularis (Crab-eating macaque).